The sequence spans 581 residues: Multicopper oxidase LPR1 (581 aa).

The first 28 residues, 1–28, serve as a signal peptide directing secretion; it reads MESLLCRRRIKRVMVLIIALTWLRSTCG. 4 residues coordinate Cu cation: histidine 148, histidine 150, histidine 196, and histidine 198. Residues asparagine 254, asparagine 298, asparagine 386, and asparagine 458 are each glycosylated (N-linked (GlcNAc...) asparagine). The 70-residue stretch at 283–352 folds into the Plastocyanin-like domain; it reads PRLNVRRRKY…DVVVDFYKSP (70 aa). Histidine 464, histidine 467, and histidine 469 together coordinate Cu cation. N-linked (GlcNAc...) asparagine glycosylation is present at asparagine 546. Residues histidine 562, cysteine 563, histidine 564, histidine 568, and methionine 573 each contribute to the Cu cation site.

Belongs to the multicopper oxidase family. The cofactor is Cu cation.

It localises to the endoplasmic reticulum membrane. Multicopper oxidase that may be involved in copper homeostasis and oxidative stress response, and that is necessary for root growth inhibition by low phosphate conditions. Functions together with LPR2 and PDR2 in a common pathway that adjusts root meristem activity to phosphate availability. Oxidizes the substrate 2,2'-azinobis-(3-ethylbenzthiazoline-6-sulphonate) in vitro. The sequence is that of Multicopper oxidase LPR1 (LPR1) from Arabidopsis thaliana (Mouse-ear cress).